We begin with the raw amino-acid sequence, 94 residues long: Large ribosomal subunit protein uL23 (94 aa).

It belongs to the universal ribosomal protein uL23 family. In terms of assembly, part of the 50S ribosomal subunit. Contacts protein L29, and trigger factor when it is bound to the ribosome.

In terms of biological role, one of the early assembly proteins it binds 23S rRNA. One of the proteins that surrounds the polypeptide exit tunnel on the outside of the ribosome. Forms the main docking site for trigger factor binding to the ribosome. This is Large ribosomal subunit protein uL23 from Geobacter metallireducens (strain ATCC 53774 / DSM 7210 / GS-15).